Reading from the N-terminus, the 411-residue chain is Peptide chain release factor subunit 1 (411 aa).

It belongs to the eukaryotic release factor 1 family. Heterodimer of two subunits, one of which binds GTP.

It localises to the cytoplasm. In terms of biological role, directs the termination of nascent peptide synthesis (translation) in response to the termination codons UAA, UAG and UGA. This is Peptide chain release factor subunit 1 from Methanosphaera stadtmanae (strain ATCC 43021 / DSM 3091 / JCM 11832 / MCB-3).